The sequence spans 219 residues: 3-dehydroquinate dehydratase (219 aa).

3-dehydroquinate is bound by residues E34–R36 and R63. The Proton donor/acceptor role is filled by H114. K139 serves as the catalytic Schiff-base intermediate with substrate. The 3-dehydroquinate site is built by R174, T193, and Q197.

The protein belongs to the type-I 3-dehydroquinase family. As to quaternary structure, homodimer.

It catalyses the reaction 3-dehydroquinate = 3-dehydroshikimate + H2O. It participates in metabolic intermediate biosynthesis; chorismate biosynthesis; chorismate from D-erythrose 4-phosphate and phosphoenolpyruvate: step 3/7. Involved in the third step of the chorismate pathway, which leads to the biosynthesis of aromatic amino acids. Catalyzes the cis-dehydration of 3-dehydroquinate (DHQ) and introduces the first double bond of the aromatic ring to yield 3-dehydroshikimate. This chain is 3-dehydroquinate dehydratase, found in Sulfolobus acidocaldarius (strain ATCC 33909 / DSM 639 / JCM 8929 / NBRC 15157 / NCIMB 11770).